Consider the following 481-residue polypeptide: Tripartite motif-containing protein 10 (481 aa).

Residues 16 to 61 (CPICQGTLREPVTIDCGHNFCRACLTRYCEIPGPDLEESPTCPLCK) form an RING-type zinc finger. The segment at 94–135 (GEEDVCQEHGEKIYFFCEDDEMQLCVVCREAGEHATHTMRFL) adopts a B box-type zinc-finger fold. Residues cysteine 99, histidine 102, cysteine 121, and histidine 127 each coordinate Zn(2+). Positions 142-177 (YREQIHKCLKRLRKEREETQEIQSRENKRMQVLLTQ) form a coiled coil. A B30.2/SPRY domain is found at 292–481 (REMKMFLEKL…GRGSSFFLSS (190 aa)).

The protein belongs to the TRIM/RBCC family. In terms of assembly, interacts with IFNAR1; this interaction prevents association of IFNAR1 with TYK2.

It is found in the cytoplasm. Functionally, E3 ligase that plays an essential role in the differentiation and survival of terminal erythroid cells. May directly bind to PTEN and promote its ubiquitination, resulting in its proteasomal degradation and activation of hypertrophic signaling. In addition, plays a role in immune response regulation by repressing the phosphorylation of STAT1 and STAT2 in the interferon/JAK/STAT signaling pathway independent of its E3 ligase activity. Mechanistically, interacts with the intracellular domain of IFNAR1 and thereby inhibits the association of TYK2 and IFNAR1. The polypeptide is Tripartite motif-containing protein 10 (TRIM10) (Pan troglodytes (Chimpanzee)).